The chain runs to 326 residues: tRNA-modifying protein YgfZ (326 aa).

Folate-binding residues include Trp-27 and Trp-189.

It belongs to the tRNA-modifying YgfZ family.

The protein localises to the cytoplasm. In terms of biological role, folate-binding protein involved in regulating the level of ATP-DnaA and in the modification of some tRNAs. It is probably a key factor in regulatory networks that act via tRNA modification, such as initiation of chromosomal replication. The chain is tRNA-modifying protein YgfZ from Enterobacter sp. (strain 638).